Here is a 92-residue protein sequence, read N- to C-terminus: uncharacterized protein (92 aa).

This is an uncharacterized protein from Treponema pallidum (strain Nichols).